A 232-amino-acid polypeptide reads, in one-letter code: Ribose-5-phosphate isomerase A (232 aa).

Residues 28–31, 83–86, and 96–99 contribute to the substrate site; these read TGST, DGAD, and KGGG. The active-site Proton acceptor is Glu-105. Lys-123 lines the substrate pocket.

It belongs to the ribose 5-phosphate isomerase family. Homodimer.

It carries out the reaction aldehydo-D-ribose 5-phosphate = D-ribulose 5-phosphate. It participates in carbohydrate degradation; pentose phosphate pathway; D-ribose 5-phosphate from D-ribulose 5-phosphate (non-oxidative stage): step 1/1. Its function is as follows. Catalyzes the reversible conversion of ribose-5-phosphate to ribulose 5-phosphate. This is Ribose-5-phosphate isomerase A from Nitrobacter hamburgensis (strain DSM 10229 / NCIMB 13809 / X14).